The sequence spans 421 residues: Synaptotagmin-1 (421 aa).

At 1 to 57 (MVSASHPEALAAPVTTVATLVPHNATEPASPGEGKEDAFSKLKQKFMNELHKIPLPP) the chain is on the vesicular side. N-linked (GlcNAc...) asparagine glycosylation is present at N24. Residues 58 to 79 (WALIAIAIVAVLLVVTCCFCVC) form a helical membrane-spanning segment. Residues C74, C75, C77, C79, and C82 are each lipidated (S-palmitoyl cysteine). Topologically, residues 80–421 (KKCLFKKKNK…EVDAMLAVKK (342 aa)) are cytoplasmic. The segment at 112–141 (TMKDQALKDDDAETGLTDGEEKEEPKEEEK) is disordered. Acidic residues predominate over residues 121–133 (DDAETGLTDGEEK). At T128 the chain carries Phosphothreonine. Positions 135–381 (EPKEEEKLGK…AIGKVFVGYN (247 aa)) are phospholipid binding. Residues 141–260 (KLGKLQYSLD…DFGHVTEEWR (120 aa)) form the C2 1 domain. L171, D172, and D178 together coordinate Ca(2+). The residue at position 229 (Y229) is a Phosphotyrosine. D230, F231, D232, S235, K236, and D238 together coordinate Ca(2+). S264 carries the phosphoserine modification. Positions 272–405 (KLGDICFSLR…NPRRPIAQWH (134 aa)) constitute a C2 2 domain. 2 residues coordinate Ca(2+): D303 and D309. Phosphoserine occurs at positions 342 and 344. The Ca(2+) site is built by D363, D365, and D371.

The protein belongs to the synaptotagmin family. Homotetramer. Heterodimer; heterodimerizes with SYT2 in presence of calcium. Interacts with SCAMP5. Interacts with STON2. Forms a complex with SV2B, syntaxin 1 and SNAP25. Interacts with SV2A, SV2B and SV2C. Interacts with RIMS1. Interacts with PRRT2. Interacts with DNAJC5 in a phosphorylation-dependent manner. Interacts (via N-terminus) with RAB3A. Interacts with SYT12. Interacts with calmodulin. Interacts with DNM1 (via C-terminal proline-rich domain (PRD)); this interaction facilitates vesicle fission during clathrin-mediated endocytosis (CME). In terms of assembly, (Microbial infection) Interacts with C.botulinum neurotoxin type B (BoNT/B, botB). Has lower affinity for BoNT/B than Syt2; mutating its residues to match those in Syt2 increases its affinity. As to quaternary structure, (Microbial infection) Interacts with C.botulinum neurotoxin type G (BoNT/G, botG). Requires Ca(2+) as cofactor. Glycosylated. As to expression, expressed in the brain (at protein level). Predominantly expressed in rostral, phylogenetically younger brain regions, and in some endocrine tissues.

The protein localises to the cytoplasmic vesicle. Its subcellular location is the secretory vesicle membrane. It is found in the secretory vesicle. It localises to the synaptic vesicle membrane. The protein resides in the chromaffin granule membrane. The protein localises to the cytoplasm. Functionally, calcium sensor that participates in triggering neurotransmitter release at the synapse. May have a regulatory role in the membrane interactions during trafficking of synaptic vesicles at the active zone of the synapse. It binds acidic phospholipids with a specificity that requires the presence of both an acidic head group and a diacyl backbone. A Ca(2+)-dependent interaction between synaptotagmin and putative receptors for activated protein kinase C has also been reported. It can bind to at least three additional proteins in a Ca(2+)-independent manner; these are neurexins, syntaxin and AP2. Plays a role in dendrite formation by melanocytes. Its function is as follows. (Microbial infection) Receptor for C.botulinum neurotoxin type B (BoNT/B, botB); interaction is improved in the presence of gangliosides. BoNT/B toxin binds to the membrane proximal vesicular domain of Syt1 (residues 32-51). In terms of biological role, (Microbial infection) Receptor for C.botulinum neurotoxin type G (BoNT/G, botG); unlike the case with BoNT/B, interaction is not improved in the presence of gangliosides. BoNT/G toxin binds to the vesicular domain of Syt1 (residues 32-53). This is Synaptotagmin-1 from Rattus norvegicus (Rat).